Consider the following 332-residue polypeptide: L-lactate dehydrogenase A chain (332 aa).

Residues 29 to 57 and Arg-99 contribute to the NAD(+) site; that span reads GMVGMASAISILLKDLCDELALVDVMEDK. 3 residues coordinate substrate: Arg-106, Asn-138, and Arg-169. Asn-138 is a binding site for NAD(+). His-193 serves as the catalytic Proton acceptor. A substrate-binding site is contributed by Thr-248.

This sequence belongs to the LDH/MDH superfamily. LDH family. In terms of assembly, homotetramer.

The protein resides in the cytoplasm. The catalysed reaction is (S)-lactate + NAD(+) = pyruvate + NADH + H(+). It functions in the pathway fermentation; pyruvate fermentation to lactate; (S)-lactate from pyruvate: step 1/1. Functionally, interconverts simultaneously and stereospecifically pyruvate and lactate with concomitant interconversion of NADH and NAD(+). This is L-lactate dehydrogenase A chain (ldha) from Gillichthys seta (Shortjaw mudsucker).